Consider the following 961-residue polypeptide: MDDSENNAPSTPGSPGFSTDRLPPNTTTSRGATDPSSYSDDDDDDVVGAEEAEVDPNVLPEDDGVVAAEEEEDGEDLFNDNYLDDYRRMDEQDQYESVGLDDSIEDERNLDEIMADRRAAEAELDARDVRTGAAPDRKLPRMLHDQDTDEDMSFRRPKRHRANFRPPREPRTPRSDDDGDGATPSSPGRSQRGMYSGGDVPMTDQTDDDPYEDEFDEEDEMNMYRVQGTLREWVTRDEVRRFIAKKFKEFLLTYVNPKNEQGEFEYVRLINEMVLANKCSLEIDYKQFIYIHPNIAIWLADAPQSVLEVMEEVAKNVVFDLHKNYRNIHQKIYVRITNLPVYDQIRNIRQIHLNTMIRIGGVVTRRSGVFPQLQQVKFDCSKCGTVLGPFFQNSYTEVKVGSCPECQSKGPFTINVEQTIYRNYQKLTLQESPGIVPAGRLPRYKEVILLNDLIDCARPGEEIEVTGIYTNNFDLSLNTKNGFPVFATVVEANYVAKKQDLFSAYKLTDEDKAEIEKLAKDPRIGERIVKSIAPSIYGHEDIKTAIALAMFGGQEKNVKGKHRLRGDINVLLLGDPGTAKSQFLKYVEKTGHRAVYTTGKGASAVGLTAAVHKDPVTREWTLEGGALVLADRGICLIDEFDKMNDQDRVSIHEAMEQQSISISKAGIVTSLQARCSVIAAANPIGGRYDSSKTFTQNVELTDPIISRFDVLCVVKDIVDPFTDEMLARFVVDSHARSQPKGANLEDRVPTDVEDDPLAAARQADPDILSQDMLKKYITYAKLNVFPKIHDADLDKISHVYAELRRESSHGQGVPIAVRHIESIIRMSEAHARMHLRSYVSQEDVDMAIRVLLDSFISTQKFGVQKALQKNFRKYMTYKKDYNELLLLLLRTLVKDVLHFEEIVSGPTTRLTHIEVKVEDLKNKAQEYEIYDLRPFFSSAHFRDNNFVLDEGRGIIRHPLAA.

A compositionally biased stretch (polar residues) spans 1–17 (MDDSENNAPSTPGSPGF). 2 disordered regions span residues 1-81 (MDDS…FNDN) and 120-220 (AEAE…EEDE). Residues 39 to 78 (SDDDDDDVVGAEEAEVDPNVLPEDDGVVAAEEEEDGEDLF) are compositionally biased toward acidic residues. Basic and acidic residues-rich tracts occupy residues 120 to 146 (AEAE…LHDQ) and 166 to 176 (PPREPRTPRSD). The segment covering 205 to 220 (QTDDDPYEDEFDEEDE) has biased composition (acidic residues). The segment at 380-406 (CSKCGTVLGPFFQNSYTEVKVGSCPEC) adopts a C4-type zinc-finger fold. An MCM domain is found at 524-730 (IGERIVKSIA…FTDEMLARFV (207 aa)). Residue 574–581 (GDPGTAKS) coordinates ATP. Positions 706–709 (SRFD) match the Arginine finger motif.

Belongs to the MCM family. In terms of assembly, component of the minichromosome maintenance (MCM) complex, a heterotetramer composed of MCM2, MCM3, MCM4, MCM5, MCM6 and MCM7. Interacts with CSN5. As to expression, widely expressed, with higher expression in developing tissues.

Its subcellular location is the nucleus. The enzyme catalyses ATP + H2O = ADP + phosphate + H(+). Probable component of the MCM2-7 complex (MCM complex) that may function as a DNA helicase and which is essential to undergo a single round of replication initiation and elongation per cell cycle in eukaryotic cells. Can complement the fission yeast mcm2 mutant. The polypeptide is DNA replication licensing factor MCM2 (Oryza sativa subsp. japonica (Rice)).